The following is a 293-amino-acid chain: Ribonuclease HIII (293 aa).

An RNase H type-2 domain is found at 78–293 (LPLIGTDEVG…TEKAKKRLER (216 aa)). 3 residues coordinate a divalent metal cation: aspartate 84, glutamate 85, and aspartate 187.

Belongs to the RNase HII family. RnhC subfamily. The cofactor is Mn(2+). Mg(2+) serves as cofactor.

It is found in the cytoplasm. The catalysed reaction is Endonucleolytic cleavage to 5'-phosphomonoester.. Its function is as follows. Endonuclease that specifically degrades the RNA of RNA-DNA hybrids. The polypeptide is Ribonuclease HIII (Streptococcus pneumoniae (strain 70585)).